The chain runs to 179 residues: Orotate phosphoribosyltransferase (179 aa).

5-phospho-alpha-D-ribose 1-diphosphate is bound by residues R94, K95, K98, H100, and 120–128 (EDTSTTGNS). Residues T124 and R152 each coordinate orotate.

This sequence belongs to the purine/pyrimidine phosphoribosyltransferase family. PyrE subfamily. As to quaternary structure, homodimer. The cofactor is Mg(2+).

The catalysed reaction is orotidine 5'-phosphate + diphosphate = orotate + 5-phospho-alpha-D-ribose 1-diphosphate. It functions in the pathway pyrimidine metabolism; UMP biosynthesis via de novo pathway; UMP from orotate: step 1/2. In terms of biological role, catalyzes the transfer of a ribosyl phosphate group from 5-phosphoribose 1-diphosphate to orotate, leading to the formation of orotidine monophosphate (OMP). This is Orotate phosphoribosyltransferase from Mycobacterium avium (strain 104).